The primary structure comprises 1039 residues: MSFTPEVVSRKSGVGVIPSPAPFLTPRLERRRPDSFSNRLDRDNKEVNVQVILRCKPLSEEEQKSSVPRVISCNEMRREVNVLHTIANKQVDRLFNFDKVFGPKSQQRSIYDQAIAPIVHEVLEGFSCTVFAYGQTGTGKTYTMEGGMRKKGGDLPAEAGVIPRAVRHIFDTLEAQNADYSMKVTFLELYNEEVTDLLAQDDSSRSSEDKQRKPISLMEDGKGSVVLRGLEEEVVYSANDIYALLERGSSKRRTADTLLNKRSSRSHSVFTITVHIKEESMGDEELIKCGKLNLVDLAGSENILRSGARDGRAREAGEINKSLLTLGRVINALVEHSSHVPYRDSKLTRLLRDSLGGKTKTCIIATISPSAHSLEETLSTLDYAYRAKNIKNKPEANQKLSKAVLLKDLYLELERMKEDVRAARDKNGVYIAHERYTQEEVEKKARIERIEQLENELNLSESEVSKFCDLYETEKEKLLDVESDLKDCKRNLHNSNKDLLDLKENYIQVVSKLKEKEVIVSRMKASETSLIDRAKGLRCDLQHASNDINSLFTRLDQKDKLESDNQSMLLKFGSQLDQNLKDLHRTVLGSVSQQQQQLRTMEEHTHSFLAHKYDATRDLESRIGKTSDTYTSGIAALKELSEMLQKKASSDLEKKNTSIVSQIEAVEKFLTTSATEASAVAQDIHNLLNDQKKLLALAARQQEQGLVRSMRSAQEISNSTSTIFSNIYNQAHDVVEAIRASQAEKSRQLDAFEMKFKEEAEREEKQALNDISLILSKLTSKKTAMISDASSNIREHDIQEEKRLYEQMSGMQQVSIGAKEELCDYLKKEKTHFTENTIASAESITVMDSYLEDCLGRANDSKTLWETTETGIKNLNTKYQQELNVTMEDMAKENEKVQDEFTSTFSSMDANFVSRTNELHAAVNDSLMQDRENKETTEAIVETCMNQVTLLQENHGQAVSNIRNKAEQSLIKDYQVDQHKNETPKKQSINVPSLDSIEEMRTLFSQNTLSEEHTSLEKISTKQGLGEANNRTPFLEVNK.

The Kinesin motor domain occupies 48–390 (NVQVILRCKP…LDYAYRAKNI (343 aa)). Position 134 to 141 (134 to 141 (GQTGTGKT)) interacts with ATP. The disordered stretch occupies residues 1008–1039 (TLSEEHTSLEKISTKQGLGEANNRTPFLEVNK). Basic and acidic residues predominate over residues 1010–1020 (SEEHTSLEKIS).

Belongs to the TRAFAC class myosin-kinesin ATPase superfamily. Kinesin family. KIN-5/BimC subfamily.

It localises to the cytoplasm. The protein localises to the cytoskeleton. Its subcellular location is the spindle. Its function is as follows. Responsible for microtubule translocation. May be important for the organization of phragmoplast-specific arrays of microtubules. Plays an essential role in stabilizing the mitotic spindle. Required during mitotic cytokinesis. The polypeptide is Kinesin-like protein KIN-5B (Arabidopsis thaliana (Mouse-ear cress)).